We begin with the raw amino-acid sequence, 162 residues long: MSYVGHLVKSFTLWEFVKAHALTLKYFFKPKATINYPFEKNPLSPRFRGEHALRRYPNGEERCIACKLCEAVCPAQAITIEAEPRDDGSRRTTRYDIDMTKCIYCGFCQEACPVDAIVEGPNFEYATETREELLYDKAKLLANGDKWERAIAANLAADAPYR.

4Fe-4S ferredoxin-type domains lie at 53–83 (LRRYPNGEERCIACKLCEAVCPAQAITIEAE) and 93–122 (TRYDIDMTKCIYCGFCQEACPVDAIVEGPN). Residues cysteine 63, cysteine 66, cysteine 69, cysteine 73, cysteine 102, cysteine 105, cysteine 108, and cysteine 112 each coordinate [4Fe-4S] cluster.

It belongs to the complex I 23 kDa subunit family. As to quaternary structure, NDH-1 is composed of 14 different subunits. Subunits NuoA, H, J, K, L, M, N constitute the membrane sector of the complex. [4Fe-4S] cluster is required as a cofactor.

Its subcellular location is the cell inner membrane. The enzyme catalyses a quinone + NADH + 5 H(+)(in) = a quinol + NAD(+) + 4 H(+)(out). In terms of biological role, NDH-1 shuttles electrons from NADH, via FMN and iron-sulfur (Fe-S) centers, to quinones in the respiratory chain. The immediate electron acceptor for the enzyme in this species is believed to be ubiquinone. Couples the redox reaction to proton translocation (for every two electrons transferred, four hydrogen ions are translocated across the cytoplasmic membrane), and thus conserves the redox energy in a proton gradient. The protein is NADH-quinone oxidoreductase subunit I of Sphingopyxis alaskensis (strain DSM 13593 / LMG 18877 / RB2256) (Sphingomonas alaskensis).